Here is a 712-residue protein sequence, read N- to C-terminus: Capsid protein (712 aa).

Disordered regions lie at residues 614 to 633 and 646 to 665; these read LTST…KEVR and CWMS…PESS. Residues 670–706 adopt a coiled-coil conformation; sequence YDNHTKLAKRVKKEIHNQNRRHRLLLAHLRRERDRLL.

The protein belongs to the anelloviridae capsid protein family.

Its subcellular location is the virion. Its function is as follows. Self-assembles to form an icosahedral capsid with a T=1 symmetry, about 30 nm in diameter, and consisting of 60 capsid proteins. The capsid encapsulates the genomic DNA. Capsid protein is involved in attachment and entry into the host cell. This Torque teno tamarin virus (isolate So-TTV2) protein is Capsid protein.